We begin with the raw amino-acid sequence, 344 residues long: L-threonine 3-dehydrogenase (344 aa).

Cysteine 42 serves as a coordination point for Zn(2+). Residues threonine 44 and histidine 47 each act as charge relay system in the active site. 6 residues coordinate Zn(2+): histidine 67, glutamate 68, cysteine 97, cysteine 100, cysteine 103, and cysteine 111. Residues isoleucine 179, aspartate 199, arginine 204, leucine 266–isoleucine 268, and isoleucine 290–tyrosine 291 contribute to the NAD(+) site.

The protein belongs to the zinc-containing alcohol dehydrogenase family. Homotetramer. It depends on Zn(2+) as a cofactor.

The protein resides in the cytoplasm. The enzyme catalyses L-threonine + NAD(+) = (2S)-2-amino-3-oxobutanoate + NADH + H(+). The protein operates within amino-acid degradation; L-threonine degradation via oxydo-reductase pathway; glycine from L-threonine: step 1/2. Functionally, catalyzes the NAD(+)-dependent oxidation of L-threonine to 2-amino-3-ketobutyrate. This is L-threonine 3-dehydrogenase from Mesorhizobium japonicum (strain LMG 29417 / CECT 9101 / MAFF 303099) (Mesorhizobium loti (strain MAFF 303099)).